The chain runs to 91 residues: Anther-specific protein RTS (91 aa).

The first 21 residues, 1 to 21 (MVRVGAAAAVLVLAAAAAAMA), serve as a signal peptide directing secretion.

Required for tapetum and pollen development. This chain is Anther-specific protein RTS, found in Oryza sativa subsp. japonica (Rice).